A 300-amino-acid chain; its full sequence is F-box/LRR-repeat protein 15 (300 aa).

An N-acetylmethionine modification is found at M1. Positions 19–66 constitute an F-box domain; the sequence is FLDLPWEDVLLPHVLNRVPLRQLLRLQRVSRAFRSLVQLHLAGLRRFD. Residues 113 to 269 are interaction with SMURF1; sequence NPQLRSVALG…ESSLSRLRKR (157 aa). LRR repeat units follow at residues 141–162, 167–188, 194–215, 220–241, and 246–267; these read RLQR…RGLA, ALEE…VYLA, GLRS…QELA, ELHH…RTLA, and VLRS…SRLR.

The protein belongs to the FBXL15 family. As to quaternary structure, part of the SCF (SKP1-CUL1-F-box) E3 ubiquitin-protein ligase complex SCF(FBXL15) composed of CUL1, SKP1, RBX1 and FBXL15.

It is found in the cytoplasm. The protein operates within protein modification; protein ubiquitination. Its function is as follows. Substrate recognition component of a SCF (SKP1-CUL1-F-box protein) E3 ubiquitin-protein ligase complex which mediates the ubiquitination and subsequent proteasomal degradation of SMURF1, thereby acting as a positive regulator of the BMP signaling pathway. Required for dorsal/ventral pattern formation and bone mass maintenance. Also mediates ubiquitination of SMURF2 and WWP2. This Homo sapiens (Human) protein is F-box/LRR-repeat protein 15 (FBXL15).